Consider the following 151-residue polypeptide: 3-hydroxyacyl-[acyl-carrier-protein] dehydratase FabZ (151 aa).

Residue His58 is part of the active site.

This sequence belongs to the thioester dehydratase family. FabZ subfamily.

It localises to the cytoplasm. The catalysed reaction is a (3R)-hydroxyacyl-[ACP] = a (2E)-enoyl-[ACP] + H2O. Its function is as follows. Involved in unsaturated fatty acids biosynthesis. Catalyzes the dehydration of short chain beta-hydroxyacyl-ACPs and long chain saturated and unsaturated beta-hydroxyacyl-ACPs. This Histophilus somni (strain 129Pt) (Haemophilus somnus) protein is 3-hydroxyacyl-[acyl-carrier-protein] dehydratase FabZ.